The following is a 302-amino-acid chain: Recombination-associated protein RdgC (302 aa).

It belongs to the RdgC family.

It is found in the cytoplasm. The protein resides in the nucleoid. Functionally, may be involved in recombination. This chain is Recombination-associated protein RdgC, found in Haemophilus influenzae (strain PittGG).